A 671-amino-acid chain; its full sequence is Replication protein A 70 kDa DNA-binding subunit (671 aa).

Disordered regions lie at residues 143–166 and 190–219; these read QVSQ…PAVN and MNKT…LQIS. Positions 199-213 are enriched in low complexity; it reads NNNNNNNNNGNNKNN. Residues 240–322 constitute a DNA-binding region (OB); sequence QTIKVRITKK…NKGDHTVTVN (83 aa). A C4-type zinc finger spans residues 530–549; that stretch reads CFSCKKKIARNNEVWTCINC.

Belongs to the replication factor A protein 1 family. Component of the replication protein A complex (RPA), a heterotrimeric complex composed of RPA1, RPA2/TEB2 and RPA3/TEB3.

Functionally, as part of the heterotrimeric replication protein A (RPA) complex, binds and stabilizes single-stranded DNA intermediates, that form during DNA replication or upon DNA stress. It prevents their reannealing and in parallel, recruits and activates different proteins and complexes involved in DNA metabolism. Thereby, it plays an essential role both in DNA replication and the cellular response to DNA damage. In the cellular response to DNA damage, the RPA complex controls DNA repair and DNA damage checkpoint activation. This is Replication protein A 70 kDa DNA-binding subunit from Tetrahymena thermophila (strain SB210).